Consider the following 144-residue polypeptide: 3-hydroxyacyl-[acyl-carrier-protein] dehydratase FabZ (144 aa).

The active site involves histidine 51.

The protein belongs to the thioester dehydratase family. FabZ subfamily.

The protein localises to the cytoplasm. It carries out the reaction a (3R)-hydroxyacyl-[ACP] = a (2E)-enoyl-[ACP] + H2O. Involved in unsaturated fatty acids biosynthesis. Catalyzes the dehydration of short chain beta-hydroxyacyl-ACPs and long chain saturated and unsaturated beta-hydroxyacyl-ACPs. This chain is 3-hydroxyacyl-[acyl-carrier-protein] dehydratase FabZ, found in Clostridium botulinum (strain Langeland / NCTC 10281 / Type F).